We begin with the raw amino-acid sequence, 469 residues long: 3-isopropylmalate dehydratase large subunit (469 aa).

The [4Fe-4S] cluster site is built by Cys350, Cys410, and Cys413.

This sequence belongs to the aconitase/IPM isomerase family. LeuC type 1 subfamily. In terms of assembly, heterodimer of LeuC and LeuD. [4Fe-4S] cluster serves as cofactor.

It carries out the reaction (2R,3S)-3-isopropylmalate = (2S)-2-isopropylmalate. It participates in amino-acid biosynthesis; L-leucine biosynthesis; L-leucine from 3-methyl-2-oxobutanoate: step 2/4. Its function is as follows. Catalyzes the isomerization between 2-isopropylmalate and 3-isopropylmalate, via the formation of 2-isopropylmaleate. The protein is 3-isopropylmalate dehydratase large subunit of Rhizobium johnstonii (strain DSM 114642 / LMG 32736 / 3841) (Rhizobium leguminosarum bv. viciae).